A 355-amino-acid polypeptide reads, in one-letter code: Chorismate synthase (355 aa).

R48 serves as a coordination point for NADP(+). FMN is bound by residues 125 to 127 (RSS), 238 to 239 (NA), G278, 293 to 297 (KPASS), and R319.

The protein belongs to the chorismate synthase family. In terms of assembly, homotetramer. Requires FMNH2 as cofactor.

The enzyme catalyses 5-O-(1-carboxyvinyl)-3-phosphoshikimate = chorismate + phosphate. Its pathway is metabolic intermediate biosynthesis; chorismate biosynthesis; chorismate from D-erythrose 4-phosphate and phosphoenolpyruvate: step 7/7. In terms of biological role, catalyzes the anti-1,4-elimination of the C-3 phosphate and the C-6 proR hydrogen from 5-enolpyruvylshikimate-3-phosphate (EPSP) to yield chorismate, which is the branch point compound that serves as the starting substrate for the three terminal pathways of aromatic amino acid biosynthesis. This reaction introduces a second double bond into the aromatic ring system. The polypeptide is Chorismate synthase (Baumannia cicadellinicola subsp. Homalodisca coagulata).